Here is a 124-residue protein sequence, read N- to C-terminus: Cytochrome c oxidase subunit 4 isoform 1, mitochondrial (124 aa).

The residue at position 4 (Lys4) is an N6-acetyllysine; alternate. Lys4 is subject to N6-succinyllysine; alternate. A phosphoserine mark is found at Ser31 and Ser33. Position 35 is an N6-acetyllysine; alternate (Lys35). Lys35 bears the N6-succinyllysine; alternate mark. Residue Lys42 is modified to N6-acetyllysine.

Belongs to the cytochrome c oxidase IV family. As to quaternary structure, component of the cytochrome c oxidase (complex IV, CIV), a multisubunit enzyme composed of 14 subunits. The complex is composed of a catalytic core of 3 subunits MT-CO1, MT-CO2 and MT-CO3, encoded in the mitochondrial DNA, and 11 supernumerary subunits COX4I, COX5A, COX5B, COX6A, COX6B, COX6C, COX7A, COX7B, COX7C, COX8 and NDUFA4, which are encoded in the nuclear genome. The complex exists as a monomer or a dimer and forms supercomplexes (SCs) in the inner mitochondrial membrane with NADH-ubiquinone oxidoreductase (complex I, CI) and ubiquinol-cytochrome c oxidoreductase (cytochrome b-c1 complex, complex III, CIII), resulting in different assemblies (supercomplex SCI(1)III(2)IV(1) and megacomplex MCI(2)III(2)IV(2)). Interacts with PHB2; the interaction decreases in absence of SPHK2. Interacts with AFG1L. Interacts with ABCB7; this interaction allows the regulation of cellular iron homeostasis and cellular reactive oxygen species (ROS) levels in cardiomyocytes. Interacts with FLVCR2; this interaction occurs in the absence of heme and is disrupted upon heme binding. Interacts with IRGC.

It is found in the mitochondrion inner membrane. It participates in energy metabolism; oxidative phosphorylation. In terms of biological role, component of the cytochrome c oxidase, the last enzyme in the mitochondrial electron transport chain which drives oxidative phosphorylation. The respiratory chain contains 3 multisubunit complexes succinate dehydrogenase (complex II, CII), ubiquinol-cytochrome c oxidoreductase (cytochrome b-c1 complex, complex III, CIII) and cytochrome c oxidase (complex IV, CIV), that cooperate to transfer electrons derived from NADH and succinate to molecular oxygen, creating an electrochemical gradient over the inner membrane that drives transmembrane transport and the ATP synthase. Cytochrome c oxidase is the component of the respiratory chain that catalyzes the reduction of oxygen to water. Electrons originating from reduced cytochrome c in the intermembrane space (IMS) are transferred via the dinuclear copper A center (CU(A)) of subunit 2 and heme A of subunit 1 to the active site in subunit 1, a binuclear center (BNC) formed by heme A3 and copper B (CU(B)). The BNC reduces molecular oxygen to 2 water molecules using 4 electrons from cytochrome c in the IMS and 4 protons from the mitochondrial matrix. The protein is Cytochrome c oxidase subunit 4 isoform 1, mitochondrial (COX4I1) of Saimiri sciureus (Common squirrel monkey).